The chain runs to 894 residues: Bifunctional glutamine synthetase adenylyltransferase/adenylyl-removing enzyme (894 aa).

An adenylyl removase region spans residues 1–410 (MPANTSAAIA…HFEQVFILPS (410 aa)). Residues 415-894 (SHPLSELWLD…QVFEQALDFS (480 aa)) form an adenylyl transferase region.

It belongs to the GlnE family. Requires Mg(2+) as cofactor.

The catalysed reaction is [glutamine synthetase]-O(4)-(5'-adenylyl)-L-tyrosine + phosphate = [glutamine synthetase]-L-tyrosine + ADP. The enzyme catalyses [glutamine synthetase]-L-tyrosine + ATP = [glutamine synthetase]-O(4)-(5'-adenylyl)-L-tyrosine + diphosphate. In terms of biological role, involved in the regulation of glutamine synthetase GlnA, a key enzyme in the process to assimilate ammonia. When cellular nitrogen levels are high, the C-terminal adenylyl transferase (AT) inactivates GlnA by covalent transfer of an adenylyl group from ATP to specific tyrosine residue of GlnA, thus reducing its activity. Conversely, when nitrogen levels are low, the N-terminal adenylyl removase (AR) activates GlnA by removing the adenylyl group by phosphorolysis, increasing its activity. The regulatory region of GlnE binds the signal transduction protein PII (GlnB) which indicates the nitrogen status of the cell. This Chromobacterium violaceum (strain ATCC 12472 / DSM 30191 / JCM 1249 / CCUG 213 / NBRC 12614 / NCIMB 9131 / NCTC 9757 / MK) protein is Bifunctional glutamine synthetase adenylyltransferase/adenylyl-removing enzyme.